A 451-amino-acid polypeptide reads, in one-letter code: Subtilase-type proteinase psp3 (451 aa).

An N-terminal signal peptide occupies residues 1–20 (MRVSWISGLLLVAHLAPSSA). Residues 80 to 161 (YIVMFKPSVD…LVEPDRVMHV (82 aa)) enclose the Inhibitor I9 domain. A Peptidase S8 domain is found at 169-451 (PWGLARVSHR…PNVLAFNNYE (283 aa)). Active-site charge relay system residues include Asp205, His237, and Ser394.

The protein belongs to the peptidase S8 family.

In Schizosaccharomyces pombe (strain 972 / ATCC 24843) (Fission yeast), this protein is Subtilase-type proteinase psp3 (psp3).